The chain runs to 115 residues: MNPLIQSLTESQLRTDIPNFRPGDTVRVHAKVVEGNRERVQIFEGVVISRKGQGISEMYTVRKISSGVGVERTFPTHTPRVEKIEVTRHGKVRRAKLYYLRALQGKAARIKEVRQ.

It belongs to the bacterial ribosomal protein bL19 family.

Its function is as follows. This protein is located at the 30S-50S ribosomal subunit interface and may play a role in the structure and function of the aminoacyl-tRNA binding site. The chain is Large ribosomal subunit protein bL19 from Streptococcus mutans serotype c (strain ATCC 700610 / UA159).